The following is a 784-amino-acid chain: Toll-like receptor 2 (784 aa).

The N-terminal stretch at 1–20 (MPRALWTAWVWAVIILSMEG) is a signal peptide. Topologically, residues 21 to 587 (ASHQASSLSC…ARLSLSECHR (567 aa)) are extracellular. A disulfide bridge connects residues C30 and C36. 19 LRR repeats span residues 54-77 (VKSL…RCVN), 78-101 (LKTL…HLRN), 102-125 (LEYL…SLYA), 126-150 (LKFL…HLPN), 151-175 (LRTL…GLIF), 176-199 (LEEL…SIQN), 200-223 (ISHL…IVSS), 224-250 (LDCL…MNTS), 251-278 (VKKL…YVSG), 279-308 (ILEV…HLGN), 309-337 (VETL…LTGK), 338-361 (VKRV…HLKS), 362-388 (LEYL…AWPF), 389-414 (LQTL…TLKN), 415-437 (LNNL…WPGK), 438-457 (MKQL…CLPQ), 458-478 (TLEI…ILPQ), 479-500 (LKEL…FLPV), and 501-524 (LSVM…SFPQ). N-linked (GlcNAc...) asparagine glycosylation is present at N114. The N-linked (GlcNAc...) asparagine glycan is linked to N199. The N-linked (GlcNAc...) asparagine glycan is linked to N248. A disulfide bridge connects residues C353 and C382. An intrachain disulfide couples C432 to C454. A glycan (N-linked (GlcNAc...) asparagine) is linked at N442. Residues 525–579 (LKALEAGGNNFICSCDFLSFTQGQQALARVLVDWPDGYRCDAPSHVRGQRVQDAR) form the LRRCT domain. A helical transmembrane segment spans residues 588 to 608 (AAVVSAVCCALFLLLLLTGVL). Residues 609-784 (CHRFHGLWYM…WLNLRAAIRS (176 aa)) lie on the Cytoplasmic side of the membrane. Residues 639-782 (LCYDAFVSYS…AFWLNLRAAI (144 aa)) enclose the TIR domain. K754 participates in a covalent cross-link: Glycyl lysine isopeptide (Lys-Gly) (interchain with G-Cter in ubiquitin). Residues 761–778 (YLEWPTDETQQEAFWLNL) carry the ATG16L1-binding motif motif.

It belongs to the Toll-like receptor family. In terms of assembly, interacts with LY96, TLR1 and TLR6 (via extracellular domain). TLR2 seems to exist in heterodimers with either TLR1 or TLR6 before stimulation by the ligand. The heterodimers form bigger oligomers in response to their corresponding ligands as well as further heterotypic associations with other receptors such as CD14 and/or CD36. Binds MYD88 (via TIR domain). Interacts with TICAM1. Interacts with CNPY3. Interacts with ATG16L1. Interacts with PPP1R11. Interacts with TICAM2. Interacts with TIRAP. Post-translationally, ubiquitinated at Lys-754 by PPP1R11, leading to its degradation. Deubiquitinated by USP2. Glycosylation of Asn-442 is critical for secretion of the N-terminal ectodomain of TLR2.

Its subcellular location is the membrane. It localises to the cytoplasmic vesicle. It is found in the phagosome membrane. The protein localises to the membrane raft. Cooperates with LY96 to mediate the innate immune response to bacterial lipoproteins and other microbial cell wall components. Cooperates with TLR1 or TLR6 to mediate the innate immune response to bacterial lipoproteins or lipopeptides. Acts via MYD88 and TRAF6, leading to NF-kappa-B activation, cytokine secretion and the inflammatory response. May also promote apoptosis in response to lipoproteins. Forms activation clusters composed of several receptors depending on the ligand, these clusters trigger signaling from the cell surface and subsequently are targeted to the Golgi in a lipid-raft dependent pathway. Forms the cluster TLR2:TLR6:CD14:CD36 in response to diacylated lipopeptides and TLR2:TLR1:CD14 in response to triacylated lipopeptides. The chain is Toll-like receptor 2 (TLR2) from Capra hircus (Goat).